A 299-amino-acid polypeptide reads, in one-letter code: DNA-binding transcriptional repressor CapW (299 aa).

Positions 1-84 (MESSGSSKVR…EFKPITKRSE (84 aa)) are winged HTH domain. The segment at 85 to 196 (ATRYLNELQR…IGRLDVLEHV (112 aa)) is WYL domain. One can recognise a WYL domain in the interval 120 to 200 (SRAIEADEVA…DVLEHVFSAK (81 aa)). The probable ligand-binding region stretch occupies residues 145-189 (YQSMDAPEPQEWVLSPHALGFDGLRWHARAWCHARQVFRDFAIGR). The WCX domain stretch occupies residues 197 to 299 (FSAKPVDPLL…DRDGLQHLRR (103 aa)).

As to quaternary structure, homodimer.

Its function is as follows. Transcriptional regulator of a CBASS antivirus system. CBASS (cyclic oligonucleotide-based antiphage signaling system) provides immunity against bacteriophage. The CD-NTase protein synthesizes cyclic nucleotides in response to infection; these serve as specific second messenger signals. The signals activate a diverse range of effectors, leading to bacterial cell death and thus abortive phage infection. A type III CBASS system, part of a CapW-Cap6-Cap8-Cap7-CdnC-NucC locus. Binds specifically to palindromes that overlap the -10 site in the promoter of cap6, found beween found between the genes for divergently transcribed capW and cap6 (cognate DNA). Probably represses transcription bidirectionally from the promoter. Mutations that make it a constitutive repressor in E.coli do not change DNA-binding affinity. In Stenotrophomonas maltophilia (Pseudomonas maltophilia), this protein is DNA-binding transcriptional repressor CapW.